The primary structure comprises 351 residues: MRPPAPAVLGLLLLLLPTGEATKKPTPCKRCRELVDKFNQGMVDTAKKNFGGGNTAWEEKTLSKYEFSEVRLLEIVEGLCEASDFECNQLLEEQEELLEAWWLRLKKKHPDLFEWFCVQTLKACCSPGTYGPDCLACQGGSERPCSGNGHCVGDGTREGDGSCQCHLGYQGPLCSDCMDGYFRSPTSETHSICSACDEACKTCVGPTNRDCGQCEVGWVRQDDACVDVDECAAEPPPCEDTQYCENVNGSFVCEECDPTCMGCTGKGPTQCRECIAGYSKESGQCEDIDECSLAEKPCLRDNENCYNTPGSFVCVCPDGFEEAEDTCVQTRPAGAEATEASPTQPPSREDL.

An N-terminal signal peptide occupies residues 1–21 (MRPPAPAVLGLLLLLLPTGEA). The short motif at 28–31 (CKRC) is the CXXC element. Cystine bridges form between C28–C31, C137–C151, C145–C163, and C165–C174. Residues 133–175 (DCLACQGGSERPCSGNGHCVGDGTREGDGSCQCHLGYQGPLCS) enclose the EGF-like 1 domain. One copy of the FU 1 repeat lies at 190–237 (HSICSACDEACKTCVGPTNRDCGQCEVGWVRQDDACVDVDECAAEPPP). Residue N248 is glycosylated (N-linked (GlcNAc...) asparagine). One copy of the FU 2 repeat lies at 250–297 (SFVCEECDPTCMGCTGKGPTQCRECIAGYSKESGQCEDIDECSLAEKP). The CXXC motif lies at 260 to 263 (CMGC). Intrachain disulfides connect C260–C263, C291–C305, C298–C314, and C316–C327. Positions 287–328 (DIDECSLAEKPCLRDNENCYNTPGSFVCVCPDGFEEAEDTCV) constitute an EGF-like 2; calcium-binding domain. The tract at residues 329-351 (QTRPAGAEATEASPTQPPSREDL) is disordered.

It belongs to the CRELD family. Interacts with CHRNA4. Component of a complex containing at least CRELD2, MANF, MATN3 and PDIA4.

The protein localises to the endoplasmic reticulum. The catalysed reaction is Catalyzes the rearrangement of -S-S- bonds in proteins.. In terms of biological role, protein disulfide isomerase. Might play a role in the unfolded protein response. May regulate transport of alpha4-beta2 neuronal acetylcholine receptor. In Bos taurus (Bovine), this protein is Protein disulfide isomerase CRELD2 (CRELD2).